The following is a 35-amino-acid chain: Cupiennin-1d (35 aa).

Residue E35 is modified to Glutamic acid 1-amide.

Belongs to the cationic peptide 04 (cupiennin) family. 01 subfamily. In terms of tissue distribution, expressed by the venom gland.

Its subcellular location is the secreted. Has antimicrobial activity against B.subtilis, E.coli, E.faecalis, P.aeruginosa, and S.aureus. Has insecticidal and hemolytic activities. Probably acts by disturbing membrane function with its amphipathic structure. The polypeptide is Cupiennin-1d (Cupiennius salei (American wandering spider)).